The primary structure comprises 509 residues: tRNA-2-methylthio-N(6)-dimethylallyladenosine synthase (509 aa).

Over residues 1 to 15 (MNEQQRLASQQVNSS) the composition is skewed to polar residues. Residues 1-23 (MNEQQRLASQQVNSSTKKEEKDY) are disordered. Positions 66 to 184 (RKFYIRTYGC…LPYILKDAMF (119 aa)) constitute an MTTase N-terminal domain. [4Fe-4S] cluster is bound by residues C75, C111, C145, C221, C225, and C228. The Radical SAM core domain occupies 207–437 (RRGDIKAWVN…NALVNKLAIE (231 aa)). One can recognise a TRAM domain in the interval 440 to 503 (DRYKGQIVEV…TWSLNGELVE (64 aa)).

The protein belongs to the methylthiotransferase family. MiaB subfamily. In terms of assembly, monomer. The cofactor is [4Fe-4S] cluster.

Its subcellular location is the cytoplasm. It carries out the reaction N(6)-dimethylallyladenosine(37) in tRNA + (sulfur carrier)-SH + AH2 + 2 S-adenosyl-L-methionine = 2-methylsulfanyl-N(6)-dimethylallyladenosine(37) in tRNA + (sulfur carrier)-H + 5'-deoxyadenosine + L-methionine + A + S-adenosyl-L-homocysteine + 2 H(+). In terms of biological role, catalyzes the methylthiolation of N6-(dimethylallyl)adenosine (i(6)A), leading to the formation of 2-methylthio-N6-(dimethylallyl)adenosine (ms(2)i(6)A) at position 37 in tRNAs that read codons beginning with uridine. The protein is tRNA-2-methylthio-N(6)-dimethylallyladenosine synthase of Bacillus anthracis.